Reading from the N-terminus, the 69-residue chain is Large ribosomal subunit protein uL29 (69 aa).

The protein belongs to the universal ribosomal protein uL29 family.

The protein is Large ribosomal subunit protein uL29 of Staphylococcus saprophyticus subsp. saprophyticus (strain ATCC 15305 / DSM 20229 / NCIMB 8711 / NCTC 7292 / S-41).